We begin with the raw amino-acid sequence, 189 residues long: Putative manganese efflux pump MntP (189 aa).

6 consecutive transmembrane segments (helical) span residues 3–23 (LSATLVLAFAMSMDAFAASIG), 41–61 (LIFGVIEAITPLIGWCIGLFA), 65–85 (ILEWDHWIAFSLLFILGCRMI), 104–124 (FWVLVMTAIATSLDAMAIGVG), 132–152 (IVHTAMAIGLATMIMATLGML), and 165–185 (AEIIGGIVLIGIGFNILYEHI).

This sequence belongs to the MntP (TC 9.B.29) family.

The protein resides in the cell inner membrane. In terms of biological role, probably functions as a manganese efflux pump. This Yersinia enterocolitica serotype O:8 / biotype 1B (strain NCTC 13174 / 8081) protein is Putative manganese efflux pump MntP.